We begin with the raw amino-acid sequence, 311 residues long: Putative S-adenosyl-L-methionine-dependent methyltransferase MSMEG_0095/MSMEI_0092 (311 aa).

Residues aspartate 134 and 163 to 164 (DL) contribute to the S-adenosyl-L-methionine site.

This sequence belongs to the UPF0677 family.

Functionally, exhibits S-adenosyl-L-methionine-dependent methyltransferase activity. The protein is Putative S-adenosyl-L-methionine-dependent methyltransferase MSMEG_0095/MSMEI_0092 of Mycolicibacterium smegmatis (strain ATCC 700084 / mc(2)155) (Mycobacterium smegmatis).